Consider the following 512-residue polypeptide: GMP synthase [glutamine-hydrolyzing] (512 aa).

The region spanning 5–195 (GIVILDFGSQ…IFGIAKAEKN (191 aa)) is the Glutamine amidotransferase type-1 domain. Cys-82 (nucleophile) is an active-site residue. Residues His-169 and Glu-171 contribute to the active site. The region spanning 196-387 (WSMENYIEST…LGIPDYMVDR (192 aa)) is the GMPS ATP-PPase domain. 223–229 (SGGVDSS) is a binding site for ATP.

Homodimer.

The enzyme catalyses XMP + L-glutamine + ATP + H2O = GMP + L-glutamate + AMP + diphosphate + 2 H(+). Its pathway is purine metabolism; GMP biosynthesis; GMP from XMP (L-Gln route): step 1/1. Its function is as follows. Catalyzes the synthesis of GMP from XMP. The sequence is that of GMP synthase [glutamine-hydrolyzing] from Fusobacterium nucleatum subsp. nucleatum (strain ATCC 25586 / DSM 15643 / BCRC 10681 / CIP 101130 / JCM 8532 / KCTC 2640 / LMG 13131 / VPI 4355).